The following is a 104-amino-acid chain: Large ribosomal subunit protein uL24 (104 aa).

This sequence belongs to the universal ribosomal protein uL24 family. In terms of assembly, part of the 50S ribosomal subunit.

One of two assembly initiator proteins, it binds directly to the 5'-end of the 23S rRNA, where it nucleates assembly of the 50S subunit. Functionally, one of the proteins that surrounds the polypeptide exit tunnel on the outside of the subunit. In Serratia proteamaculans (strain 568), this protein is Large ribosomal subunit protein uL24.